Here is a 123-residue protein sequence, read N- to C-terminus: NADH dehydrogenase [ubiquinone] 1 beta subcomplex subunit 7 (123 aa).

The tract at residues 1 to 32 is disordered; that stretch reads MGTKLSVSLEGASTPETAPRVDRPPTFDPQYG. The CHCH domain maps to 59–102; that stretch reads RDYCAHHLISLMKCQTQNAPFAGHACDGERGAWDKCEYDDHIMR. Short sequence motifs (cx9C motif) lie at residues 62 to 72 and 84 to 94; these read CAHHLISLMKC and CDGERGAWDKC. 2 disulfides stabilise this stretch: C62–C94 and C72–C84.

The protein belongs to the complex I NDUFB7 subunit family. In terms of assembly, complex I is composed of 45 different subunits.

Its subcellular location is the mitochondrion. The protein localises to the mitochondrion inner membrane. It localises to the mitochondrion intermembrane space. In terms of biological role, accessory subunit of the mitochondrial membrane respiratory chain NADH dehydrogenase (Complex I), that is believed not to be involved in catalysis. Complex I functions in the transfer of electrons from NADH to the respiratory chain. The immediate electron acceptor for the enzyme is believed to be ubiquinone. This chain is NADH dehydrogenase [ubiquinone] 1 beta subcomplex subunit 7, found in Caenorhabditis elegans.